The following is a 499-amino-acid chain: MTLILTSLLFFGLSLGPRTRVQAENLLKPILWAEPGPVITWHNPVTIWCQGTLEAQGYRLDKEGNSMSRHILKTLESENKVKLSIPSMMWEHAGRYHCYYQSPAGWSEPSDPLELVVTAYSRPTLSALPSPVVTSGVNVTLRCASRLGLGRFTLIEEGDHRLSWTLNSHQHNHGKFQALFPMGPLTFSNRGTFRCYGYENNTPYVWSEPSDPLQLLVSGVSRKPSLLTLQGPVVTPGENLTLQCGSDVGYIRYTLYKEGADGLPQRPGRQPQAGLSQANFTLSPVSRSYGGQYRCYGAHNVSSEWSAPSDPLDILIAGQISDRPSLSVQPGPTVTSGEKVTLLCQSWDPMFTFLLTKEGAAHPPLRLRSMYGAHKYQAEFPMSPVTSAHAGTYRCYGSRSSNPYLLSHPSEPLELVVSGATETLNPAQKKSDSKTAPHLQDYTVENLIRMGVAGLVLLFLGILLFEAQHSQRSPPRCSQEANSRKDNAPFRVVEPWEQI.

The first 23 residues, 1 to 23 (MTLILTSLLFFGLSLGPRTRVQA), serve as a signal peptide directing secretion. 4 consecutive Ig-like C2-type domains span residues 24–118 (ENLL…LVVT), 123–213 (PTLS…SDPL), 224–313 (PSLL…DPLD), and 324–413 (PSLS…SEPL). The Extracellular segment spans residues 24–446 (ENLLKPILWA…PHLQDYTVEN (423 aa)). A disulfide bond links Cys-49 and Cys-98. The N-linked (GlcNAc...) asparagine glycan is linked to Asn-138. Cys-143 and Cys-195 are joined by a disulfide. N-linked (GlcNAc...) asparagine glycosylation is found at Asn-239, Asn-279, and Asn-300. Cysteines 244 and 295 form a disulfide. The cysteines at positions 344 and 395 are disulfide-linked. The residue at position 404 (Tyr-404) is a 3'-nitrotyrosine. A helical transmembrane segment spans residues 447-467 (LIRMGVAGLVLLFLGILLFEA). At 468–499 (QHSQRSPPRCSQEANSRKDNAPFRVVEPWEQI) the chain is on the cytoplasmic side.

Interacts with FCER1G; this stabilizes the expression of both proteins at the cell membrane. Interacts with BST2; leads to activation of LILRA4-mediated signaling and down-regulation of the innate immune response to viral pathogens. In terms of tissue distribution, detected on plasmacytoid dendritic cells (at protein level). Detected on plasmacytoid dendritic cells, but not on monocytes or B cells.

The protein resides in the cell membrane. Functionally, functions coreceptor to limit the innate immune responses to viral infections; signaling occurs via FCER1G. Down-regulates the production of IFNA1, IFNA2, IFNA4, IFNB1 and TNF by plasmacytoid dendritic cells that have been exposed to influenza virus or cytidine-phosphate-guanosine (CpG) dinucleotides, indicating it functions as a negative regulator of TLR7 and TLR9 signaling cascades. Down-regulates interferon production in response to interaction with BST2 on HIV-1 infected cells. Activates a signaling cascade in complex with FCER1G that results in phosphorylation of Src family and Syk kinases and thereby triggers mobilization of intracellular Ca(2+). Does not interfere with the differentiation of plasmacytoid dendritic cells into antigen-presenting cells. This is Leukocyte immunoglobulin-like receptor subfamily A member 4 from Homo sapiens (Human).